Reading from the N-terminus, the 228-residue chain is Ras-related protein Rab-32D (228 aa).

GTP is bound at residue 16–23 (GDVNVGKT). The Effector region signature appears at 38–46 (YKSTIGADF). GTP contacts are provided by residues 64–68 (DTAGQ) and 128–131 (NKSD). The segment at 183-228 (SDNEQFNDSPDEETSSITLLGTSKKHDNTNPNKPSTSSPSSCFNCK) is disordered. Over residues 185–196 (NEQFNDSPDEET) the composition is skewed to acidic residues. Residues 211–228 (TNPNKPSTSSPSSCFNCK) show a composition bias toward low complexity. Residue Cys224 is the site of S-geranylgeranyl cysteine attachment.

The protein belongs to the small GTPase superfamily. Rab family.

In Dictyostelium discoideum (Social amoeba), this protein is Ras-related protein Rab-32D (rab32D).